We begin with the raw amino-acid sequence, 338 residues long: MSSNADTSQAVSAGTSVGATFGKVAVLMGGMSAEREISLMSGRGVLQALRSRGVDAHAFDPAERDISELKKDEFARCFIALHGRFGEDGTVQGALELLGIPYTGSGVMASSMAIDKVMTKRVMLAEGLPTPTYVLLRRGSYGSADVSAVPDKLGLPLIVKPAREGSSIGLTKVTERAGMADAVAQAEKLDADILCEQFISGDEVTCPVLGTGSEARALPVIRIVAPDGNYDYQNKYFTDTTQYLVPCGLPEGEEAVIQQLVLQAYRTLNCRGWARADVMIDKVTRKPYLLEINTSPGMTGHSLVPMSARAAGISYEDLCIEVLKTTALDHQSQGGGAS.

Residues 120–324 (KRVMLAEGLP…YEDLCIEVLK (205 aa)) enclose the ATP-grasp domain. 150–205 (PDKLGLPLIVKPAREGSSIGLTKVTERAGMADAVAQAEKLDADILCEQFISGDEVT) provides a ligand contact to ATP. Mg(2+) contacts are provided by Asp277, Glu291, and Asn293.

The protein belongs to the D-alanine--D-alanine ligase family. The cofactor is Mg(2+). Requires Mn(2+) as cofactor.

The protein localises to the cytoplasm. It carries out the reaction 2 D-alanine + ATP = D-alanyl-D-alanine + ADP + phosphate + H(+). It participates in cell wall biogenesis; peptidoglycan biosynthesis. In terms of biological role, cell wall formation. This is D-alanine--D-alanine ligase from Polaromonas sp. (strain JS666 / ATCC BAA-500).